A 785-amino-acid chain; its full sequence is Rho-GTPase-activating protein RGD3 (785 aa).

N-acetylserine is present on Ser2. The region spanning 31 to 463 (ISLRNTYWTK…PQETANADVR (433 aa)) is the F-BAR domain. The interval 313-340 (SNGNAGNRKKKSYGELTHSDNEHEEKSN) is disordered. Basic and acidic residues predominate over residues 329–339 (THSDNEHEEKS). Residues 520 to 702 (IILRQIEKEP…TFFINERTVE (183 aa)) enclose the Rho-GAP domain. The interval 732–785 (TAPIHSTPKPPPNDKDGHFIPRPFKTSSTPTTPERPKRKSGLFLPINVNDVPST) is disordered. Residue Ser759 is modified to Phosphoserine. 3 positions are modified to phosphothreonine: Thr760, Thr762, and Thr763.

Phosphorylation at the C-terminus negatively regulates the activity and the polarized localization.

The protein localises to the cytoplasmic vesicle membrane. It localises to the cell membrane. It is found in the bud tip. Its subcellular location is the bud neck. In terms of biological role, GTPase activating protein (GAP) for RHO3 and CDC42 that binds membranes through phosphatidylinositol 4,5-bisphosphate. Plays a key role in cell polarity. Modulates the RHO3 distribution at the plasma membrane and its polarity during growth. This is Rho-GTPase-activating protein RGD3 from Saccharomyces cerevisiae (strain ATCC 204508 / S288c) (Baker's yeast).